Consider the following 285-residue polypeptide: 2-dehydro-3-deoxyphosphooctonate aldolase (285 aa).

This sequence belongs to the KdsA family.

Its subcellular location is the cytoplasm. The catalysed reaction is D-arabinose 5-phosphate + phosphoenolpyruvate + H2O = 3-deoxy-alpha-D-manno-2-octulosonate-8-phosphate + phosphate. It functions in the pathway carbohydrate biosynthesis; 3-deoxy-D-manno-octulosonate biosynthesis; 3-deoxy-D-manno-octulosonate from D-ribulose 5-phosphate: step 2/3. It participates in bacterial outer membrane biogenesis; lipopolysaccharide biosynthesis. The polypeptide is 2-dehydro-3-deoxyphosphooctonate aldolase (Variovorax paradoxus (strain S110)).